We begin with the raw amino-acid sequence, 644 residues long: Archaeal Lon protease (644 aa).

Positions 1–18 (MKTTIKNSRTQESVSYEG) are enriched in polar residues. The interval 1-30 (MKTTIKNSRTQESVSYEGNETKKGTGETLS) is disordered. The Cytoplasmic portion of the chain corresponds to 1 to 137 (MKTTIKNSRT…KARSQDEKKN (137 aa)). Residue 71–78 (GEPGVGKS) participates in ATP binding. Helical transmembrane passes span 138–155 (LFMM…FMMN) and 156–171 (QFLA…FLAL). Topologically, residues 172 to 644 (QQFRPRTTVM…PSIMKKPAMH (473 aa)) are cytoplasmic. The region spanning 438-617 (GGEVGRVNGL…GDVLEHALIG (180 aa)) is the Lon proteolytic domain. Residues Ser524 and Lys567 contribute to the active site.

The protein belongs to the peptidase S16 family. Archaeal LonB subfamily. Homohexamer. Organized in a ring with a central cavity.

It is found in the cell membrane. Its function is as follows. ATP-dependent serine protease that mediates the selective degradation of mutant and abnormal proteins as well as certain short-lived regulatory proteins. Degrades polypeptides processively. The chain is Archaeal Lon protease from Methanothermobacter thermautotrophicus (strain ATCC 29096 / DSM 1053 / JCM 10044 / NBRC 100330 / Delta H) (Methanobacterium thermoautotrophicum).